The chain runs to 347 residues: GMP reductase (347 aa).

108–131 is an NADP(+) binding site; it reads ADFAKTAQILALNPALNFVCIDVA. K(+) is bound by residues Gly-181 and Gly-183. The Thioimidate intermediate role is filled by Cys-186. Residue 216-239 participates in NADP(+) binding; it reads IVSDGGCTMPGDVAKAFGGGADFV.

Belongs to the IMPDH/GMPR family. GuaC type 1 subfamily. As to quaternary structure, homotetramer.

It catalyses the reaction IMP + NH4(+) + NADP(+) = GMP + NADPH + 2 H(+). In terms of biological role, catalyzes the irreversible NADPH-dependent deamination of GMP to IMP. It functions in the conversion of nucleobase, nucleoside and nucleotide derivatives of G to A nucleotides, and in maintaining the intracellular balance of A and G nucleotides. The sequence is that of GMP reductase from Salmonella arizonae (strain ATCC BAA-731 / CDC346-86 / RSK2980).